An 87-amino-acid chain; its full sequence is NAD(P)H-quinone oxidoreductase subunit O (87 aa).

Positions 1 to 10 are enriched in basic and acidic residues; it reads MSEQTGKVDD. The disordered stretch occupies residues 1-23; that stretch reads MSEQTGKVDDSQSPPKVQKKLRK.

This sequence belongs to the complex I NdhO subunit family. In terms of assembly, NDH-1 can be composed of about 15 different subunits; different subcomplexes with different compositions have been identified which probably have different functions.

Its subcellular location is the cellular thylakoid membrane. The catalysed reaction is a plastoquinone + NADH + (n+1) H(+)(in) = a plastoquinol + NAD(+) + n H(+)(out). The enzyme catalyses a plastoquinone + NADPH + (n+1) H(+)(in) = a plastoquinol + NADP(+) + n H(+)(out). Functionally, NDH-1 shuttles electrons from an unknown electron donor, via FMN and iron-sulfur (Fe-S) centers, to quinones in the respiratory and/or the photosynthetic chain. The immediate electron acceptor for the enzyme in this species is believed to be plastoquinone. Couples the redox reaction to proton translocation, and thus conserves the redox energy in a proton gradient. Cyanobacterial NDH-1 also plays a role in inorganic carbon-concentration. This chain is NAD(P)H-quinone oxidoreductase subunit O, found in Prochlorococcus marinus (strain NATL2A).